A 100-amino-acid polypeptide reads, in one-letter code: Small ribosomal subunit protein bS18c (100 aa).

The span at 1–19 shows a compositional bias: basic residues; that stretch reads MDKSKRPFRKSKRSFRRRL. Positions 1–23 are disordered; the sequence is MDKSKRPFRKSKRSFRRRLPPIG.

It belongs to the bacterial ribosomal protein bS18 family. As to quaternary structure, part of the 30S ribosomal subunit.

The protein localises to the plastid. The protein resides in the chloroplast. In Calycanthus floridus var. glaucus (Eastern sweetshrub), this protein is Small ribosomal subunit protein bS18c.